Reading from the N-terminus, the 345-residue chain is Delta(1)-pyrroline-2-carboxylate reductase (345 aa).

Ser47 serves as the catalytic Charge relay system. The Proton donor role is filled by His48. Arg52 contributes to the substrate binding site. 121–125 (HFSAL) contributes to the NADP(+) binding site. Thr161 is a binding site for substrate. 179–181 (DFA) is a binding site for NADP(+). 187–188 (RG) lines the substrate pocket. Glu189 acts as the Charge relay system in catalysis. NADP(+)-binding positions include 230 to 231 (HK) and 305 to 311 (RLPSGRR).

Belongs to the LDH2/MDH2 oxidoreductase family. As to quaternary structure, homodimer.

The catalysed reaction is L-proline + NAD(+) = 1-pyrroline-2-carboxylate + NADH + H(+). It catalyses the reaction L-proline + NADP(+) = 1-pyrroline-2-carboxylate + NADPH + H(+). In terms of biological role, catalyzes the reduction of Delta(1)-pyrroline-2-carboxylate (Pyr2C) to L-proline, using NADPH as the electron donor. Is likely involved in a degradation pathway that converts trans-3-hydroxy-L-proline (t3LHyp) to L-proline, which would allow A.tumefaciens to grow on t3LHyp as a sole carbon source. The sequence is that of Delta(1)-pyrroline-2-carboxylate reductase from Agrobacterium fabrum (strain C58 / ATCC 33970) (Agrobacterium tumefaciens (strain C58)).